The primary structure comprises 510 residues: 2,3-bisphosphoglycerate-independent phosphoglycerate mutase (510 aa).

Residues aspartate 13 and serine 63 each contribute to the Mn(2+) site. Serine 63 functions as the Phosphoserine intermediate in the catalytic mechanism. Substrate-binding positions include histidine 124, 154–155 (RD), arginine 186, arginine 192, 262–265 (RADR), and lysine 334. 5 residues coordinate Mn(2+): aspartate 401, histidine 405, aspartate 442, histidine 443, and histidine 461.

This sequence belongs to the BPG-independent phosphoglycerate mutase family. In terms of assembly, monomer. Requires Mn(2+) as cofactor.

The catalysed reaction is (2R)-2-phosphoglycerate = (2R)-3-phosphoglycerate. Its pathway is carbohydrate degradation; glycolysis; pyruvate from D-glyceraldehyde 3-phosphate: step 3/5. In terms of biological role, catalyzes the interconversion of 2-phosphoglycerate and 3-phosphoglycerate. This Vibrio campbellii (strain ATCC BAA-1116) protein is 2,3-bisphosphoglycerate-independent phosphoglycerate mutase.